Consider the following 541-residue polypeptide: Chaperonin GroEL (541 aa).

Residues 29 to 32 (TLGP), 86 to 90 (DGTTT), G413, 477 to 479 (DAL), and D493 contribute to the ATP site.

It belongs to the chaperonin (HSP60) family. In terms of assembly, forms a cylinder of 14 subunits composed of two heptameric rings stacked back-to-back. Interacts with the co-chaperonin GroES.

It localises to the cytoplasm. It carries out the reaction ATP + H2O + a folded polypeptide = ADP + phosphate + an unfolded polypeptide.. Its function is as follows. Together with its co-chaperonin GroES, plays an essential role in assisting protein folding. The GroEL-GroES system forms a nano-cage that allows encapsulation of the non-native substrate proteins and provides a physical environment optimized to promote and accelerate protein folding. This chain is Chaperonin GroEL, found in Clostridium botulinum (strain ATCC 19397 / Type A).